The following is a 279-amino-acid chain: Lysozyme-like protein 2 (279 aa).

Residues 1–19 form the signal peptide; that stretch reads MIKLLVSFTILFVLSSARP. A Ch-type lysozyme domain is found at 47-265; sequence MGNAVDFSFP…AAAPKTEVNM (219 aa).

The protein belongs to the glycosyl hydrolase 25 family. Expressed in intestine.

Functionally, involved in resistance to Gram-positive bacteria P.aeruginosa or B.thuringiensis infection. The sequence is that of Lysozyme-like protein 2 from Caenorhabditis elegans.